The following is a 326-amino-acid chain: Beta-ketoacyl-[acyl-carrier-protein] synthase III (326 aa).

Catalysis depends on residues Cys111 and His252. An ACP-binding region spans residues 253–257 (QANIR). Residue Asn282 is part of the active site.

It belongs to the thiolase-like superfamily. FabH family. Homodimer.

It is found in the plastid. Its subcellular location is the chloroplast. The catalysed reaction is malonyl-[ACP] + acetyl-CoA + H(+) = 3-oxobutanoyl-[ACP] + CO2 + CoA. It functions in the pathway lipid metabolism; fatty acid biosynthesis. Catalyzes the condensation reaction of fatty acid synthesis by the addition to an acyl acceptor of two carbons from malonyl-ACP. Catalyzes the first condensation reaction which initiates fatty acid synthesis and may therefore play a role in governing the total rate of fatty acid production. Possesses both acetoacetyl-ACP synthase and acetyl transacylase activities. Its substrate specificity determines the biosynthesis of branched-chain and/or straight-chain of fatty acids. The sequence is that of Beta-ketoacyl-[acyl-carrier-protein] synthase III from Porphyra purpurea (Red seaweed).